A 433-amino-acid chain; its full sequence is Trigger factor (433 aa).

The PPIase FKBP-type domain maps to 163 to 248 (GDTVNIDFSG…VNEIKFKEVP (86 aa)).

This sequence belongs to the FKBP-type PPIase family. Tig subfamily.

The protein resides in the cytoplasm. It catalyses the reaction [protein]-peptidylproline (omega=180) = [protein]-peptidylproline (omega=0). Its function is as follows. Involved in protein export. Acts as a chaperone by maintaining the newly synthesized protein in an open conformation. Functions as a peptidyl-prolyl cis-trans isomerase. This is Trigger factor from Staphylococcus aureus (strain COL).